The primary structure comprises 412 residues: Squamosa promoter-binding-like protein 2 (412 aa).

The disordered stretch occupies residues 1-81 (MDWDAKMPSW…AAAAGKRARA (81 aa)). The span at 18-31 (PSGGGGGGGGGGGA) shows a compositional bias: gly residues. Low complexity-rich tracts occupy residues 48–57 (VSAASAAPAA) and 67–81 (SSSS…RARA). The SBP-type zinc-finger motif lies at 89-167 (VPACSVEGCA…DGHNKRRRKP (79 aa)). 8 residues coordinate Zn(2+): Cys-92, Cys-97, Cys-115, His-118, Cys-134, Cys-137, His-141, and Cys-153. Positions 150-166 (KRSCRKRLDGHNKRRRK) match the Bipartite nuclear localization signal motif.

As to expression, expressed in stems, leaf sheaths, and young panicles.

The protein resides in the nucleus. Its function is as follows. Trans-acting factor that binds specifically to the consensus nucleotide sequence 5'-TNCGTACAA-3'. May be involved in panicle development. This Oryza sativa subsp. japonica (Rice) protein is Squamosa promoter-binding-like protein 2 (SPL2).